Here is a 487-residue protein sequence, read N- to C-terminus: Cytochrome P450 720B2 (487 aa).

A helical membrane pass occupies residues 14–34 (WLVGLLCLVLGFLLLQLYKLV). C436 serves as a coordination point for heme.

This sequence belongs to the cytochrome P450 family. Heme is required as a cofactor.

The protein localises to the membrane. This chain is Cytochrome P450 720B2 (CYP720B2), found in Pinus taeda (Loblolly pine).